A 489-amino-acid chain; its full sequence is WPP domain-interacting protein 1 (489 aa).

A disordered region spans residues 49–73 (SNSVELGKPMSFDSPGDGGGAYSPV). 3 consecutive short sequence motifs (nuclear localization signal) follow at residues 80–81 (RK), 83–84 (RR), and 104–105 (KR). The segment at 195-264 (PMISSGQGGN…DDAGGEGGES (70 aa)) is disordered. A compositionally biased stretch (basic and acidic residues) spans 215-224 (GESVDFEKEN). The stretch at 323–446 (EIVTLVNNVE…QDLQNDCIEI (124 aa)) forms a coiled coil. Residues 459–489 (SYVLIQLVLLSTVVLLLLSQLLPEPDTVVPT) enclose the KASH domain. Residues 460–480 (YVLIQLVLLSTVVLLLLSQLL) form a helical membrane-spanning segment.

In terms of assembly, homodimer and heterodimer with WIP2. Component of Ran complexes at least composed of WIT1 or WIT2, RANGAP1 or RANGAP2, and WIP1 or WIP2 or WIP3. Interacts with RANGAP1, RANGAP2, WPP1/MAF1, and WPP2/MAF2. Interacts with SUN1 and SUN2. Interacts with KIN1. Core component of the LINC complex which is composed of inner nuclear membrane SUN domain-containing proteins coupled to outer nuclear membrane WIP and WIT proteins. The LINC complex also involves nucleoskeletal proteins CRWN/LINC and possibly KAKU4 and the cytoskeletal myosin KAKU1. Interacts with WIT1 and SUN2. Interacts with WIT2. Interacts with SUN3. As to expression, expressed in seedlings, roots, stems, leaves, and flowers.

Its subcellular location is the nucleus envelope. It is found in the nucleus membrane. Its function is as follows. Mediates and enhances the nuclear envelope docking of RANGAP proteins mediated by WIT1 and WIT2 in the undifferentiated cells of root tips. As component of the SUN-WIP-WIT2-KAKU1 complex, mediates the transfer of cytoplasmic forces to the nuclear envelope (NE), leading to nuclear shape changes. The polypeptide is WPP domain-interacting protein 1 (WIP1) (Arabidopsis thaliana (Mouse-ear cress)).